A 204-amino-acid polypeptide reads, in one-letter code: High frequency lysogenization protein HflD homolog (204 aa).

It belongs to the HflD family.

Its subcellular location is the cytoplasm. The protein resides in the cell inner membrane. In Shewanella woodyi (strain ATCC 51908 / MS32), this protein is High frequency lysogenization protein HflD homolog.